A 451-amino-acid polypeptide reads, in one-letter code: Photosystem II CP43 reaction center protein (451 aa).

The Cytoplasmic portion of the chain corresponds to 1–46 (ATNRDQESSGFAWWAGNARLINLSGKLLGAHVAHAGLIVFWAGAMT). The chlorophyll a site is built by Trp-13, Leu-27, and Ala-30. A helical membrane pass occupies residues 47 to 71 (LFELAHFIPEKPMYEQGLILIPHIA). The Lumenal segment spans residues 72-111 (TLGWGVGPGGEVVDTFPFFVVGVVHLISSAVLGFGGVYHA). Positions 92 and 106 each coordinate chlorophyll a. The helical transmembrane segment at 112–133 (IRGPETLEEYSSFFGYDWKDKN) threads the bilayer. Over 134-155 (KMTTILGFHLIVLGIGALLLVA) the chain is Cytoplasmic. Residue Ile-138 coordinates chlorophyll a. The helical transmembrane segment at 156–178 (KAMFFGGLYDTWAPGGGDVRVIT) threads the bilayer. Topologically, residues 179–232 (NPTLDPRVIFGYLLKSPFGGEGWIVSVNNLEDVVGGHIWIGLICIAGGIWHILT) are lumenal. Chlorophyll a-binding residues include Val-211 and Gly-225. A helical membrane pass occupies residues 233 to 253 (TPFGWARRAFIWSGEAYLSYS). Over 254–268 (LGALSMMGFIATCFV) the chain is Cytoplasmic. A helical transmembrane segment spans residues 269–290 (WFNNTVYPSEFYGPTGPEASQA). Residues 291–424 (QAMTFLIRDQ…FLVGHLWHAG (134 aa)) are Lumenal-facing. Glu-345 contacts [CaMn4O5] cluster. Leu-404, Phe-415, and Gly-418 together coordinate chlorophyll a. The helical transmembrane segment at 425 to 449 (RARAAAAGFEKGIDRESEPVLSMPS) threads the bilayer. Residues 450–451 (LD) lie on the Cytoplasmic side of the membrane.

It belongs to the PsbB/PsbC family. PsbC subfamily. In terms of assembly, PSII is composed of 1 copy each of membrane proteins PsbA, PsbB, PsbC, PsbD, PsbE, PsbF, PsbH, PsbI, PsbJ, PsbK, PsbL, PsbM, PsbT, PsbX, PsbY, PsbZ, Psb30/Ycf12, peripheral proteins PsbO, CyanoQ (PsbQ), PsbU, PsbV and a large number of cofactors. It forms dimeric complexes. It depends on Binds multiple chlorophylls and provides some of the ligands for the Ca-4Mn-5O cluster of the oxygen-evolving complex. It may also provide a ligand for a Cl- that is required for oxygen evolution. PSII binds additional chlorophylls, carotenoids and specific lipids. as a cofactor.

The protein localises to the cellular thylakoid membrane. In terms of biological role, one of the components of the core complex of photosystem II (PSII). It binds chlorophyll and helps catalyze the primary light-induced photochemical processes of PSII. PSII is a light-driven water:plastoquinone oxidoreductase, using light energy to abstract electrons from H(2)O, generating O(2) and a proton gradient subsequently used for ATP formation. The sequence is that of Photosystem II CP43 reaction center protein from Thermostichus vulcanus (Synechococcus vulcanus).